The sequence spans 141 residues: Probable mitochondrial pyruvate carrier 1 (141 aa).

The next 2 membrane-spanning stretches (helical) occupy residues 31 to 52 (YLCS…AAIL) and 60 to 82 (LISG…YAWM).

This sequence belongs to the mitochondrial pyruvate carrier (MPC) (TC 2.A.105) family. The functional 150 kDa pyruvate import complex is a heteromer of mpc1 and mpc2.

It is found in the mitochondrion. Its subcellular location is the mitochondrion inner membrane. Mediates the uptake of pyruvate into mitochondria. The polypeptide is Probable mitochondrial pyruvate carrier 1 (Schizosaccharomyces pombe (strain 972 / ATCC 24843) (Fission yeast)).